Reading from the N-terminus, the 338-residue chain is DNA-directed RNA polymerase I subunit RPA43 (338 aa).

Positions 209–338 (EVSEEVTENG…PKRKGKSNFL (130 aa)) are disordered. Phosphoserine is present on residues S242, S304, and S316. A Phosphothreonine modification is found at T322. S328 is modified (phosphoserine). Residues 328–338 (SPKRKGKSNFL) are compositionally biased toward basic residues.

This sequence belongs to the eukaryotic RPA43 RNA polymerase subunit family. Component of the RNA polymerase I (Pol I) complex consisting of 13 subunits: a ten-subunit catalytic core composed of POLR1A/RPA1, POLR1B/RPA2, POLR1C/RPAC1, POLR1D/RPAC2, POLR1H/RPA12, POLR2E/RPABC1, POLR2F/RPABC2, POLR2H/RPABC3, POLR2K/RPABC4 and POLR2L/RPABC5; a mobile stalk subunit POLR1F/RPA43 protruding from the core and additional subunits homologous to general transcription factors POLR1E/RPA49 and POLR1G/RPA34. Interacts with RRN3/TIF-IA. As to expression, widely expressed. Expressed in all fetal and adult tissues tested, with highest expression in fetal lung, liver, and kidney, and low expression in all adult tissues.

It localises to the nucleus. Its subcellular location is the nucleolus. Functionally, component of RNA polymerase I (Pol I), a DNA-dependent RNA polymerase which synthesizes ribosomal RNA precursors using the four ribonucleoside triphosphates as substrates. Through its association with RRN3/TIF-IA may be involved in recruitment of Pol I to rDNA promoters. The protein is DNA-directed RNA polymerase I subunit RPA43 of Homo sapiens (Human).